A 628-amino-acid chain; its full sequence is MSTLCAFPVPYSTIEVLNIVLPYRTYSARLLYLHAPLGNHLPFCHRSYNVLHLRQDCDSHMYSAGNDVRLSQEAVTMSDQRSHDTTADQSARDASSLDTRKIHGFPWFLLVISVLSSIFLYALDNTIVADIIPAIANDFSSINDLGWLSVGFVIGGVAVIMPLGKLYGILNTKWLYITSVVLFMAASAVCGAAPDMNAEIVGRVFAGAGGIGMYIGTMILLSINTSDQERPAYLSLVGLVWGIGTVLGPVIGGSFEKVDWRWAFYLNLVIGALLFPVWFFLLPSFHPAKHLSLNKRLSQFDFVGAILSIGAFVTTIMPINFGGTTYEWNSGTIIALFVVSGVLWIAFAVQQSLTLFTTPADRMFPVQFLKNKEAMLLFICAAAINSAVFVPIYFIPIYFQFSRGDGALDSAIRLLPLIFLLCATILVNGKLMSRFGYYMPWYLVGGVFCLIANVFLCELHPVAAVLVRYTDYKTALLDATTSQSYIYGFEALLGLGAGGSVQAGYAVIQTVVPATDLGYAVSFIMIAQIGGIALGLACASAVFINGATNSLRVLLPLLSDSELQSAISGTGGRFLETLDDNTRVQVIDAVVNNLAKAFIVAYAGAAVSLVASLGFSRKRVFLPTAAAA.

The next 14 membrane-spanning stretches (helical) occupy residues 102-122, 150-170, 174-194, 204-224, 232-252, 262-282, 302-322, 329-349, 375-395, 407-427, 435-455, 488-508, 524-544, and 595-615; these read IHGF…FLYA, VGFV…YGIL, WLYI…GAAP, VFAG…LSIN, AYLS…PVIG, WAFY…FFLL, FVGA…INFG, NSGT…AFAV, MLLF…IYFI, ALDS…TILV, FGYY…ANVF, GFEA…YAVI, IMIA…AVFI, and AKAF…SLGF.

The protein belongs to the major facilitator superfamily. TCR/Tet family.

The protein localises to the cell membrane. Its function is as follows. MFS-type transporter; part of the gene cluster that mediates the biosynthesis of phomenoic acid, a long chain aliphatic carboxylic acid that does not appear to be essential for pathogenicity but may play a role in allowing to outcompete other fungi in the environmental niche via its antifungal properties. Is probably involved in the efflux of phomenoic acid. The chain is Phomenoic acid biosynthesis cluster MFS-type transporter from Leptosphaeria maculans (strain JN3 / isolate v23.1.3 / race Av1-4-5-6-7-8) (Blackleg fungus).